The sequence spans 393 residues: Protein TsgA (393 aa).

Helical transmembrane passes span 11 to 31 (WISF…GMVM), 51 to 71 (FLNA…EIIP), 78 to 98 (FGFI…SLAL), 101 to 121 (AAMF…TFLI), 134 to 154 (LLFT…VAAF), 162 to 182 (WYWV…LTFG), 206 to 226 (IGVL…LGFI), 245 to 265 (ALVS…SFIL), 273 to 293 (ILTV…TGTQ), 298 to 318 (WFIL…ITLG), 332 to 352 (FILT…GPIV), and 361 to 381 (LLTA…LGFV).

The protein belongs to the major facilitator superfamily. TsgA family.

Its subcellular location is the cell inner membrane. The polypeptide is Protein TsgA (Salmonella agona (strain SL483)).